The chain runs to 330 residues: tRNA U34 carboxymethyltransferase (330 aa).

Carboxy-S-adenosyl-L-methionine-binding positions include Lys-91, Trp-105, Lys-110, Gly-130, 152–154 (DPS), 181–182 (IE), Met-196, Tyr-200, and Arg-315.

It belongs to the class I-like SAM-binding methyltransferase superfamily. CmoB family. As to quaternary structure, homotetramer.

The enzyme catalyses carboxy-S-adenosyl-L-methionine + 5-hydroxyuridine(34) in tRNA = 5-carboxymethoxyuridine(34) in tRNA + S-adenosyl-L-homocysteine + H(+). Catalyzes carboxymethyl transfer from carboxy-S-adenosyl-L-methionine (Cx-SAM) to 5-hydroxyuridine (ho5U) to form 5-carboxymethoxyuridine (cmo5U) at position 34 in tRNAs. The polypeptide is tRNA U34 carboxymethyltransferase (Shewanella loihica (strain ATCC BAA-1088 / PV-4)).